Here is a 666-residue protein sequence, read N- to C-terminus: Probable potassium transport system protein Kup (666 aa).

The next 12 membrane-spanning stretches (helical) occupy residues 16 to 36, 58 to 78, 99 to 119, 141 to 161, 167 to 187, 221 to 241, 253 to 273, 292 to 312, 343 to 363, 373 to 393, 402 to 422, and 424 to 444; these read GFII…LYTM, ISLI…LVAL, TPWL…DGAL, IFQN…LLFA, TGVI…FLGI, IFIL…YSDL, WPFV…WILA, FTMH…QALI, TYIP…VLLF, YGLA…FFLI, VLLM…ASAV, and FMHG…IMTI.

Belongs to the HAK/KUP transporter (TC 2.A.72) family.

The protein resides in the cell membrane. It carries out the reaction K(+)(in) + H(+)(in) = K(+)(out) + H(+)(out). Transport of potassium into the cell. Likely operates as a K(+):H(+) symporter. This Streptococcus agalactiae serotype Ia (strain ATCC 27591 / A909 / CDC SS700) protein is Probable potassium transport system protein Kup.